Consider the following 119-residue polypeptide: MORF4 family associated protein 1 like 2 (119 aa).

Over residues 1 to 16 (MRPVDADEAREPREEP) the composition is skewed to basic and acidic residues. The tract at residues 1-36 (MRPVDADEAREPREEPGSPLSPAPRAGRENLASLER) is disordered.

The protein belongs to the MORF4 family-associated protein family. As to quaternary structure, may interact with CDK2AP1.

May play a role in cell proliferation. This is MORF4 family associated protein 1 like 2 from Homo sapiens (Human).